The primary structure comprises 384 residues: Putative sarcosine oxidase (384 aa).

6–36 contributes to the FAD binding site; that stretch reads DVVVVGAGIFGSCTAYNCQKIGLKTLLLEQF. C315 carries the S-8alpha-FAD cysteine modification.

Belongs to the MSOX/MTOX family. FAD serves as cofactor.

The catalysed reaction is sarcosine + O2 + H2O = formaldehyde + glycine + H2O2. The protein is Putative sarcosine oxidase of Caenorhabditis elegans.